Consider the following 200-residue polypeptide: AP-5 complex subunit sigma-1 (200 aa).

In terms of assembly, probably part of the adaptor protein complex 5 (AP-5) a tetramer composed of AP5B1, AP5M1, AP5S1 and AP5Z1. Interacts with ZFYVE26 and SPG11.

The protein localises to the cytoplasm. It is found in the cytosol. It localises to the late endosome membrane. The protein resides in the lysosome membrane. As part of AP-5, a probable fifth adaptor protein complex it may be involved in endosomal transport. According to PubMed:20613862, it is required for efficient homologous recombination DNA double-strand break repair. This Homo sapiens (Human) protein is AP-5 complex subunit sigma-1 (AP5S1).